The chain runs to 150 residues: Histone H2A.1 (150 aa).

Residue methionine 1 is modified to N-acetylmethionine. Basic residues-rich tracts occupy residues 1 to 24 (MDAS…KKSV) and 141 to 150 (SKAKKSPKKA). Disordered stretches follow at residues 1–26 (MDAS…SVTR) and 128–150 (RKEN…PKKA). Short sequence motifs (SPKK motif) lie at residues 139 to 142 (SPSK) and 146 to 149 (SPKK).

This sequence belongs to the histone H2A family. As to quaternary structure, the nucleosome is a histone octamer containing two molecules each of H2A, H2B, H3 and H4 assembled in one H3-H4 heterotetramer and two H2A-H2B heterodimers. The octamer wraps approximately 147 bp of DNA. As to expression, high expression in root meristematic tissues, moderate in whole shoot and very low in mature leaves.

It is found in the nucleus. The protein localises to the chromosome. Core component of nucleosome. Nucleosomes wrap and compact DNA into chromatin, limiting DNA accessibility to the cellular machineries which require DNA as a template. Histones thereby play a central role in transcription regulation, DNA repair, DNA replication and chromosomal stability. DNA accessibility is regulated via a complex set of post-translational modifications of histones, also called histone code, and nucleosome remodeling. This chain is Histone H2A.1, found in Pisum sativum (Garden pea).